The following is a 374-amino-acid chain: MARDYYEILGVSRSADKEELKRAYRRLARKYHPDVNKEPGSEERFKEINRAYEILSDPEMKARFDRFGEAGVSGGAASGFSTDFSDSFADIFESFFSGFGGAGTQGRRRTGPVRGDDLRLDLNLEFIEAIFGGDKELTIKHLETCGTCNGSGAKPGTKPQTCSTCGGTGQVRRATRTPFSSFTQVSVCPSCNGSGQIIEEKCVDCGGRGQKEATKKIKITIPGGVDNGTRLRVSNEGDAGRMGGPPGDLYVFLSVKNHPEFQRDGINIISQIKISYLQAILGCCLEINTVDGKTELTIPSGTQPNAILTLEDKGVPRLGNSVSRGAHLITIEIDIPTKITPEEKELLEKLAKIKGERTGKGGIEGFLGSWFQQK.

The region spanning 4-68 (DYYEILGVSR…EMKARFDRFG (65 aa)) is the J domain. Residues 132-214 (GGDKELTIKH…CGGRGQKEAT (83 aa)) form a CR-type zinc finger. Residues Cys-145, Cys-148, Cys-162, Cys-165, Cys-188, Cys-191, Cys-202, and Cys-205 each coordinate Zn(2+). CXXCXGXG motif repeat units follow at residues 145 to 152 (CGTCNGSG), 162 to 169 (CSTCGGTG), 188 to 195 (CPSCNGSG), and 202 to 209 (CVDCGGRG).

The protein belongs to the DnaJ family. In terms of assembly, homodimer. Requires Zn(2+) as cofactor.

Its subcellular location is the cytoplasm. Its function is as follows. Participates actively in the response to hyperosmotic and heat shock by preventing the aggregation of stress-denatured proteins and by disaggregating proteins, also in an autonomous, DnaK-independent fashion. Unfolded proteins bind initially to DnaJ; upon interaction with the DnaJ-bound protein, DnaK hydrolyzes its bound ATP, resulting in the formation of a stable complex. GrpE releases ADP from DnaK; ATP binding to DnaK triggers the release of the substrate protein, thus completing the reaction cycle. Several rounds of ATP-dependent interactions between DnaJ, DnaK and GrpE are required for fully efficient folding. Also involved, together with DnaK and GrpE, in the DNA replication of plasmids through activation of initiation proteins. This chain is Chaperone protein DnaJ, found in Trichodesmium erythraeum (strain IMS101).